The chain runs to 342 residues: Ferrochelatase (342 aa).

Residues histidine 188 and glutamate 268 each contribute to the Fe cation site.

Belongs to the ferrochelatase family.

It localises to the cytoplasm. It carries out the reaction heme b + 2 H(+) = protoporphyrin IX + Fe(2+). It participates in porphyrin-containing compound metabolism; protoheme biosynthesis; protoheme from protoporphyrin-IX: step 1/1. Catalyzes the ferrous insertion into protoporphyrin IX. The sequence is that of Ferrochelatase from Rickettsia typhi (strain ATCC VR-144 / Wilmington).